Reading from the N-terminus, the 719-residue chain is Polyribonucleotide nucleotidyltransferase (719 aa).

Mg(2+)-binding residues include Asp491 and Asp497. In terms of domain architecture, KH spans 558 to 617; sequence PRMLTIKINPEKIRDVIGKGGATIRALTEETGTQIDISDDGTIVIASVDETQAKEAQRRI. An S1 motif domain is found at 627-695; the sequence is GQIYDGSVLR…DKGRLRLSIK (69 aa).

This sequence belongs to the polyribonucleotide nucleotidyltransferase family. Requires Mg(2+) as cofactor.

It is found in the cytoplasm. It carries out the reaction RNA(n+1) + phosphate = RNA(n) + a ribonucleoside 5'-diphosphate. In terms of biological role, involved in mRNA degradation. Catalyzes the phosphorolysis of single-stranded polyribonucleotides processively in the 3'- to 5'-direction. The sequence is that of Polyribonucleotide nucleotidyltransferase from Bordetella parapertussis (strain 12822 / ATCC BAA-587 / NCTC 13253).